The sequence spans 687 residues: Macrolide export ATP-binding/permease protein MacB (687 aa).

One can recognise an ABC transporter domain in the interval 6 to 244 (LKLAAVTRRF…LAEAGVDAAE (239 aa)). 42-49 (GASGSGKS) serves as a coordination point for ATP. Over residues 246 to 256 (AEASEAAVGES) the composition is skewed to low complexity. Residues 246–281 (AEASEAAVGESPTRNRHDTPAPPAAVDTDPHVDTGT) form a disordered region. Helical transmembrane passes span 312 to 332 (LLTM…VAIG), 560 to 580 (LTLL…IGVM), 617 to 637 (LVCL…GALF), and 650 to 670 (AGAI…FGFM).

The protein belongs to the ABC transporter superfamily. Macrolide exporter (TC 3.A.1.122) family. Homodimer.

The protein localises to the cell inner membrane. Its function is as follows. Non-canonical ABC transporter that contains transmembrane domains (TMD), which form a pore in the inner membrane, and an ATP-binding domain (NBD), which is responsible for energy generation. Confers resistance against macrolides. In Burkholderia lata (strain ATCC 17760 / DSM 23089 / LMG 22485 / NCIMB 9086 / R18194 / 383), this protein is Macrolide export ATP-binding/permease protein MacB.